A 389-amino-acid chain; its full sequence is Probable dual-specificity RNA methyltransferase RlmN (389 aa).

E114 (proton acceptor) is an active-site residue. Residues 120–358 (QHYGLSVCVT…CVVRQEHGTD (239 aa)) form the Radical SAM core domain. A disulfide bridge links C127 with C363. [4Fe-4S] cluster-binding residues include C134, C138, and C141. S-adenosyl-L-methionine-binding positions include 186–187 (GE), S218, 241–243 (SLH), and N319. The S-methylcysteine intermediate role is filled by C363. A disordered region spans residues 370 to 389 (TMKRDRQKAVAEASGKSEGK). Basic and acidic residues predominate over residues 371-389 (MKRDRQKAVAEASGKSEGK).

The protein belongs to the radical SAM superfamily. RlmN family. The cofactor is [4Fe-4S] cluster.

It is found in the cytoplasm. It catalyses the reaction adenosine(2503) in 23S rRNA + 2 reduced [2Fe-2S]-[ferredoxin] + 2 S-adenosyl-L-methionine = 2-methyladenosine(2503) in 23S rRNA + 5'-deoxyadenosine + L-methionine + 2 oxidized [2Fe-2S]-[ferredoxin] + S-adenosyl-L-homocysteine. The catalysed reaction is adenosine(37) in tRNA + 2 reduced [2Fe-2S]-[ferredoxin] + 2 S-adenosyl-L-methionine = 2-methyladenosine(37) in tRNA + 5'-deoxyadenosine + L-methionine + 2 oxidized [2Fe-2S]-[ferredoxin] + S-adenosyl-L-homocysteine. Functionally, specifically methylates position 2 of adenine 2503 in 23S rRNA and position 2 of adenine 37 in tRNAs. This is Probable dual-specificity RNA methyltransferase RlmN from Streptococcus thermophilus (strain CNRZ 1066).